Consider the following 131-residue polypeptide: Small ribosomal subunit protein uS9 (131 aa).

The protein belongs to the universal ribosomal protein uS9 family.

The polypeptide is Small ribosomal subunit protein uS9 (Actinobacillus pleuropneumoniae serotype 7 (strain AP76)).